We begin with the raw amino-acid sequence, 198 residues long: tRNA (pseudouridine(54)-N(1))-methyltransferase (198 aa).

L128 is a binding site for S-adenosyl-L-methionine.

This sequence belongs to the methyltransferase superfamily. TrmY family. In terms of assembly, homodimer.

The protein localises to the cytoplasm. It catalyses the reaction pseudouridine(54) in tRNA + S-adenosyl-L-methionine = N(1)-methylpseudouridine(54) in tRNA + S-adenosyl-L-homocysteine + H(+). In terms of biological role, specifically catalyzes the N1-methylation of pseudouridine at position 54 (Psi54) in tRNAs. The polypeptide is tRNA (pseudouridine(54)-N(1))-methyltransferase (Haloferax volcanii (strain ATCC 29605 / DSM 3757 / JCM 8879 / NBRC 14742 / NCIMB 2012 / VKM B-1768 / DS2) (Halobacterium volcanii)).